A 72-amino-acid polypeptide reads, in one-letter code: Translation initiation factor IF-1 2 (72 aa).

The S1-like domain occupies 1–72; the sequence is MAKEDAIEVD…KRGRITYRMK (72 aa).

It belongs to the IF-1 family. In terms of assembly, component of the 30S ribosomal translation pre-initiation complex which assembles on the 30S ribosome in the order IF-2 and IF-3, IF-1 and N-formylmethionyl-tRNA(fMet); mRNA recruitment can occur at any time during PIC assembly.

It localises to the cytoplasm. One of the essential components for the initiation of protein synthesis. Stabilizes the binding of IF-2 and IF-3 on the 30S subunit to which N-formylmethionyl-tRNA(fMet) subsequently binds. Helps modulate mRNA selection, yielding the 30S pre-initiation complex (PIC). Upon addition of the 50S ribosomal subunit IF-1, IF-2 and IF-3 are released leaving the mature 70S translation initiation complex. In Nitratidesulfovibrio vulgaris (strain DP4) (Desulfovibrio vulgaris), this protein is Translation initiation factor IF-1 2.